Consider the following 361-residue polypeptide: Phosphoserine aminotransferase (361 aa).

Arg-43 contacts L-glutamate. Pyridoxal 5'-phosphate contacts are provided by residues 77–78 (AS), Trp-103, Thr-153, Asp-173, and Gln-196. Residue Lys-197 is modified to N6-(pyridoxal phosphate)lysine. Residue 238 to 239 (NT) participates in pyridoxal 5'-phosphate binding.

The protein belongs to the class-V pyridoxal-phosphate-dependent aminotransferase family. SerC subfamily. In terms of assembly, homodimer. Requires pyridoxal 5'-phosphate as cofactor.

It localises to the cytoplasm. The catalysed reaction is O-phospho-L-serine + 2-oxoglutarate = 3-phosphooxypyruvate + L-glutamate. It catalyses the reaction 4-(phosphooxy)-L-threonine + 2-oxoglutarate = (R)-3-hydroxy-2-oxo-4-phosphooxybutanoate + L-glutamate. It functions in the pathway amino-acid biosynthesis; L-serine biosynthesis; L-serine from 3-phospho-D-glycerate: step 2/3. The protein operates within cofactor biosynthesis; pyridoxine 5'-phosphate biosynthesis; pyridoxine 5'-phosphate from D-erythrose 4-phosphate: step 3/5. Catalyzes the reversible conversion of 3-phosphohydroxypyruvate to phosphoserine and of 3-hydroxy-2-oxo-4-phosphonooxybutanoate to phosphohydroxythreonine. This Ectopseudomonas mendocina (strain ymp) (Pseudomonas mendocina) protein is Phosphoserine aminotransferase.